A 417-amino-acid chain; its full sequence is Gamma-glutamyl phosphate reductase (417 aa).

It belongs to the gamma-glutamyl phosphate reductase family.

Its subcellular location is the cytoplasm. The catalysed reaction is L-glutamate 5-semialdehyde + phosphate + NADP(+) = L-glutamyl 5-phosphate + NADPH + H(+). It functions in the pathway amino-acid biosynthesis; L-proline biosynthesis; L-glutamate 5-semialdehyde from L-glutamate: step 2/2. Functionally, catalyzes the NADPH-dependent reduction of L-glutamate 5-phosphate into L-glutamate 5-semialdehyde and phosphate. The product spontaneously undergoes cyclization to form 1-pyrroline-5-carboxylate. The polypeptide is Gamma-glutamyl phosphate reductase (Legionella pneumophila (strain Corby)).